The sequence spans 395 residues: Putative ankyrin repeat protein RF_0950 (395 aa).

ANK repeat units follow at residues Tyr3–Thr32, Tyr36–Ala65, Ile69–Val98, Arg101–Gln130, Asn134–Leu166, Asn172–Ile201, and Ala205–Glu234. The region spanning Lys272–Lys395 is the Glutamine amidotransferase type-1 domain. Cys377 acts as the Nucleophile in catalysis.

This Rickettsia felis (strain ATCC VR-1525 / URRWXCal2) (Rickettsia azadi) protein is Putative ankyrin repeat protein RF_0950.